The primary structure comprises 498 residues: uncharacterized protein (498 aa).

11 consecutive transmembrane segments (helical) span residues 54-74, 100-120, 128-148, 150-170, 188-208, 221-241, 302-322, 326-346, 353-373, 381-401, and 446-466; these read LLKM…MAFL, VAVS…VVLV, MLAF…FMSS, GGLI…FPAL, SYLF…AYAL, WIYI…LFAL, VLYG…FVGL, YMTI…AWLS, AVYL…MLAS, TATY…LGWL, and AFTL…FFSL.

The protein belongs to the major facilitator superfamily. Allantoate permease family.

The protein localises to the membrane. This is an uncharacterized protein from Schizosaccharomyces pombe (strain 972 / ATCC 24843) (Fission yeast).